We begin with the raw amino-acid sequence, 509 residues long: Protein root UVB sensitive 5 (509 aa).

The segment at 22 to 49 (CQPKRRRVEHLRCSAQPSSIREDDEDAD) is disordered.

The protein belongs to the RUS1 family.

The sequence is that of Protein root UVB sensitive 5 from Arabidopsis thaliana (Mouse-ear cress).